The sequence spans 413 residues: Aminopeptidase PepS (413 aa).

Positions 253, 319, 343, 348, 381, and 383 each coordinate a divalent metal cation.

This sequence belongs to the peptidase M29 family. In terms of assembly, monomer. The cofactor is Co(2+). Requires Zn(2+) as cofactor. Mg(2+) is required as a cofactor.

Its function is as follows. Exhibits a high specificity towards peptides possessing arginine or aromatic amino acids at the N-terminus. Could be involved both in bacterial growth by supplying amino acids. This chain is Aminopeptidase PepS (pepS), found in Streptococcus thermophilus.